Reading from the N-terminus, the 418-residue chain is Acetylornithine aminotransferase (418 aa).

Pyridoxal 5'-phosphate contacts are provided by residues 116–117 (GA) and Phe-149. Arg-152 provides a ligand contact to N(2)-acetyl-L-ornithine. Position 240-243 (240-243 (DEVQ)) interacts with pyridoxal 5'-phosphate. The residue at position 269 (Lys-269) is an N6-(pyridoxal phosphate)lysine. Ser-296 is a N(2)-acetyl-L-ornithine binding site. Pyridoxal 5'-phosphate is bound at residue Thr-297.

This sequence belongs to the class-III pyridoxal-phosphate-dependent aminotransferase family. ArgD subfamily. As to quaternary structure, homodimer. Requires pyridoxal 5'-phosphate as cofactor.

The protein localises to the cytoplasm. It catalyses the reaction N(2)-acetyl-L-ornithine + 2-oxoglutarate = N-acetyl-L-glutamate 5-semialdehyde + L-glutamate. Its pathway is amino-acid biosynthesis; L-arginine biosynthesis; N(2)-acetyl-L-ornithine from L-glutamate: step 4/4. This Prochlorococcus marinus (strain MIT 9313) protein is Acetylornithine aminotransferase.